A 2271-amino-acid chain; its full sequence is Protein Ycf2 (2271 aa).

ATP is bound at residue 1628 to 1635; sequence GSIGTGRS.

This sequence belongs to the Ycf2 family.

Its subcellular location is the plastid. It is found in the chloroplast stroma. In terms of biological role, probable ATPase of unknown function. Its presence in a non-photosynthetic plant (Epifagus virginiana) and experiments in tobacco indicate that it has an essential function which is probably not related to photosynthesis. The polypeptide is Protein Ycf2 (Illicium oligandrum (Star anise)).